Here is a 410-residue protein sequence, read N- to C-terminus: DNA replication and repair protein RecF (410 aa).

30-37 (GPNGHGKT) serves as a coordination point for ATP.

This sequence belongs to the RecF family.

It is found in the cytoplasm. Its function is as follows. The RecF protein is involved in DNA metabolism; it is required for DNA replication and normal SOS inducibility. RecF binds preferentially to single-stranded, linear DNA. It also seems to bind ATP. In Rhodococcus jostii (strain RHA1), this protein is DNA replication and repair protein RecF.